Reading from the N-terminus, the 456-residue chain is Bifunctional protein GlmU (456 aa).

The pyrophosphorylase stretch occupies residues 1-229; sequence MTKKALSAVI…VMEVEGANNR (229 aa). Residues 11–14, K25, Q76, 81–82, 103–105, G140, E154, N169, and N227 each bind UDP-N-acetyl-alpha-D-glucosamine; these read LAAG, GT, and YGD. Mg(2+) is bound at residue D105. Residue N227 participates in Mg(2+) binding. The segment at 230 to 250 is linker; sequence LQLAALERYFQNKQASKLLLE. Residues 251–456 form an N-acetyltransferase region; the sequence is GVMIYDPARF…QGWQRPIKKK (206 aa). 2 residues coordinate UDP-N-acetyl-alpha-D-glucosamine: R333 and K351. H363 functions as the Proton acceptor in the catalytic mechanism. Positions 366 and 377 each coordinate UDP-N-acetyl-alpha-D-glucosamine. Acetyl-CoA is bound by residues A380, 386-387, S405, A423, and R440; that span reads NY.

The protein in the N-terminal section; belongs to the N-acetylglucosamine-1-phosphate uridyltransferase family. It in the C-terminal section; belongs to the transferase hexapeptide repeat family. Homotrimer. Mg(2+) is required as a cofactor.

Its subcellular location is the cytoplasm. The catalysed reaction is alpha-D-glucosamine 1-phosphate + acetyl-CoA = N-acetyl-alpha-D-glucosamine 1-phosphate + CoA + H(+). The enzyme catalyses N-acetyl-alpha-D-glucosamine 1-phosphate + UTP + H(+) = UDP-N-acetyl-alpha-D-glucosamine + diphosphate. It functions in the pathway nucleotide-sugar biosynthesis; UDP-N-acetyl-alpha-D-glucosamine biosynthesis; N-acetyl-alpha-D-glucosamine 1-phosphate from alpha-D-glucosamine 6-phosphate (route II): step 2/2. It participates in nucleotide-sugar biosynthesis; UDP-N-acetyl-alpha-D-glucosamine biosynthesis; UDP-N-acetyl-alpha-D-glucosamine from N-acetyl-alpha-D-glucosamine 1-phosphate: step 1/1. Its pathway is bacterial outer membrane biogenesis; LPS lipid A biosynthesis. In terms of biological role, catalyzes the last two sequential reactions in the de novo biosynthetic pathway for UDP-N-acetylglucosamine (UDP-GlcNAc). The C-terminal domain catalyzes the transfer of acetyl group from acetyl coenzyme A to glucosamine-1-phosphate (GlcN-1-P) to produce N-acetylglucosamine-1-phosphate (GlcNAc-1-P), which is converted into UDP-GlcNAc by the transfer of uridine 5-monophosphate (from uridine 5-triphosphate), a reaction catalyzed by the N-terminal domain. In Haemophilus influenzae (strain 86-028NP), this protein is Bifunctional protein GlmU.